Consider the following 148-residue polypeptide: MRLHDLYPFPEERKTRKRVGRGSGSGLGCTSGKGNKGQNARAGGGVRPGFEGGQMPLQRRLPKRGFKNMFAVKYEVINLARLLAAFEGKAEITLDDIYDRGLCSLGSAVKILGEGDVTTAIKVEAHKFSASAVEKIRNAGGEAKALEG.

The segment at 1–57 is disordered; the sequence is MRLHDLYPFPEERKTRKRVGRGSGSGLGCTSGKGNKGQNARAGGGVRPGFEGGQMPL. Composition is skewed to gly residues over residues 21-35 and 42-52; these read RGSGSGLGCTSGKGN and AGGGVRPGFEG.

The protein belongs to the universal ribosomal protein uL15 family. Part of the 50S ribosomal subunit.

Its function is as follows. Binds to the 23S rRNA. This Nitratidesulfovibrio vulgaris (strain ATCC 29579 / DSM 644 / CCUG 34227 / NCIMB 8303 / VKM B-1760 / Hildenborough) (Desulfovibrio vulgaris) protein is Large ribosomal subunit protein uL15.